The primary structure comprises 593 residues: MTADNALYIPPYKADDQDVVVELNNRFGAEAFTAQPTRTGMPVLWVERARLFEILTFLRNVPKPYSMLYDLHGVDERLRTNRRGLPGADFTVFYHLLSIERNSDVMIKVALSESDLSVPTITSIWPNANWYEREVWDMFGIDFPGHPHLSRIMMPPTWEGHPLRKDFPARATEFDPYSLTLAKQQLEEEAARFRPEDWGMKRSGQNEDYMFLNLGPNHPSAHGAFRIILQLDGEEIVDCVPDIGYHHRGAEKMAERQSWHSFIPYTDRIDYLGGVMNNLPYVLSVEKLAGIKVPEKVDVIRIMMAEFFRITSHLLFLGTYIQDVGAMTPVFFTFTDRQKAYTVIEAITGFRLHPAWYRIGGVAHDLPRGWEKLVKDFVDWLPKRLDEYTKAALQNSILKGRTVGVAAYNTKEALEWGVTGAGLRSTGCDFDLRKARPYSGYENFEFEVPLAANGDAYDRCMVRVEEMRQSIKIIDQCMRNMPEGPYKADHPLTTPPPKERTLQHIETLITHFLQVSWGPVMPANESFQMIEATKGINSYYLTSDGGTMSYRTRIRTPSFPHLQQIPSVIQGSMVADLIAYLGSIDFVMADVDR.

The tract at residues 1 to 184 (MTADNALYIP…DPYSLTLAKQ (184 aa)) is NADH dehydrogenase I subunit C. Residues 208–593 (DYMFLNLGPN…IDFVMADVDR (386 aa)) are NADH dehydrogenase I subunit D.

The protein in the N-terminal section; belongs to the complex I 30 kDa subunit family. In the C-terminal section; belongs to the complex I 49 kDa subunit family. NDH-1 is composed of 13 different subunits. Subunits NuoB, CD, E, F, and G constitute the peripheral sector of the complex.

It localises to the cell inner membrane. It carries out the reaction a quinone + NADH + 5 H(+)(in) = a quinol + NAD(+) + 4 H(+)(out). In terms of biological role, NDH-1 shuttles electrons from NADH, via FMN and iron-sulfur (Fe-S) centers, to quinones in the respiratory chain. The immediate electron acceptor for the enzyme in this species is believed to be ubiquinone. Couples the redox reaction to proton translocation (for every two electrons transferred, four hydrogen ions are translocated across the cytoplasmic membrane), and thus conserves the redox energy in a proton gradient. This is NADH-quinone oxidoreductase subunit C/D from Pseudomonas syringae pv. tomato (strain ATCC BAA-871 / DC3000).